Here is an 88-residue protein sequence, read N- to C-terminus: Small ribosomal subunit protein uS17 (88 aa).

Belongs to the universal ribosomal protein uS17 family. Part of the 30S ribosomal subunit.

One of the primary rRNA binding proteins, it binds specifically to the 5'-end of 16S ribosomal RNA. This is Small ribosomal subunit protein uS17 from Dechloromonas aromatica (strain RCB).